The following is a 1904-amino-acid chain: Fatty acid synthase beta subunit hexB (1904 aa).

The segment at 24-395 (LSVAFGGQGP…TEGTGVRVIQ (372 aa)) is acetyltransferase (AT) domain. Residues 447–691 (TQLLNAPPVM…LIVQTEGVGD (245 aa)) are enoyl reductase (ER) domain. The dehydratase (DH) domain stretch occupies residues 1001–1491 (GPAADCWTHH…RPNDRLKIQL (491 aa)). The MaoC-like domain occupies 1399 to 1512 (PGWNEGSTVL…MKVQAFNDET (114 aa)). Residues 1530-1893 (YVFCGQGSQE…IEHVQSVTGS (364 aa)) form a malonyl/palmitoyl transferase (MT/PT) domain region.

This sequence belongs to the fungal fatty acid synthetase subunit beta family. [Alpha(6)beta(6)] hexamers of two multifunctional subunits (alpha and beta).

It catalyses the reaction acetyl-CoA + n malonyl-CoA + 2n NADPH + 4n H(+) = a long-chain-acyl-CoA + n CoA + n CO2 + 2n NADP(+).. It carries out the reaction holo-[ACP] + acetyl-CoA = acetyl-[ACP] + CoA. The catalysed reaction is holo-[ACP] + malonyl-CoA = malonyl-[ACP] + CoA. The enzyme catalyses a (3R)-hydroxyacyl-[ACP] = a (2E)-enoyl-[ACP] + H2O. It catalyses the reaction a 2,3-saturated acyl-[ACP] + NAD(+) = a (2E)-enoyl-[ACP] + NADH + H(+). It carries out the reaction (9Z)-octadecenoyl-[ACP] + H2O = (9Z)-octadecenoate + holo-[ACP] + H(+). The protein operates within mycotoxin biosynthesis. Functionally, fatty acid synthase beta subunit; part of the fragmented gene cluster that mediates the biosynthesis of dothistromin (DOTH), a polyketide toxin very similar in structure to the aflatoxin precursor, versicolorin B. The first step of the pathway is the conversion of acetate to norsolorinic acid (NOR) and requires the fatty acid synthase subunits hexA and hexB, as well as the polyketide synthase pksA. PksA combines a hexanoyl starter unit and 7 malonyl-CoA extender units to synthesize the precursor NOR. The hexanoyl starter unit is provided to the acyl-carrier protein (ACP) domain by the fungal fatty acid synthase hexA/hexB. The second step is the conversion of NOR to averantin (AVN) and requires the norsolorinic acid ketoreductase nor1, which catalyzes the dehydration of norsolorinic acid to form (1'S)-averantin. The cytochrome P450 monooxygenase avnA then catalyzes the hydroxylation of AVN to 5'hydroxyaverantin (HAVN). The next step is performed by adhA that transforms HAVN to averufin (AVF). Averufin might then be converted to hydroxyversicolorone by cypX and avfA. Hydroxyversicolorone is further converted versiconal hemiacetal acetate (VHA) by moxY. VHA is then the substrate for the versiconal hemiacetal acetate esterase est1 to yield versiconal (VAL). Versicolorin B synthase vbsA then converts VAL to versicolorin B (VERB) by closing the bisfuran ring. Then, the activity of the versicolorin B desaturase verB leads to versicolorin A (VERA). DotB, a predicted chloroperoxidase, may perform epoxidation of the A-ring of VERA. Alternatively, a cytochrome P450, such as cypX or avnA could catalyze this step. It is also possible that another, uncharacterized, cytochrome P450 enzyme is responsible for this step. Opening of the epoxide could potentially be achieved by the epoxide hydrolase epoA. However, epoA seems not to be required for DOTH biosynthesis, but other epoxide hydrolases may have the ability to complement this hydrolysis. Alternatively, opening of the epoxide ring could be achieved non-enzymatically. The next step is the deoxygenation of ring A to yield the 5,8-dihydroxyanthraquinone which is most likely catalyzed by the NADPH dehydrogenase encoded by ver1. The last stages of DOTH biosynthesis are proposed to involve hydroxylation of the bisfuran. OrdB and norB might have oxidative roles here. An alternative possibility is that cytochrome P450 monoogenases such as avnA and cypX might perform these steps in addition to previously proposed steps. The polypeptide is Fatty acid synthase beta subunit hexB (Dothistroma septosporum (strain NZE10 / CBS 128990) (Red band needle blight fungus)).